A 74-amino-acid polypeptide reads, in one-letter code: uncharacterized protein (74 aa).

Residues 35–59 form a dksA C4-type zinc finger; sequence CEECDAPIPAARRAAYPSATRCVSC.

This is an uncharacterized protein from Enterobacteriaceae (Bacteriophage P2).